The chain runs to 129 residues: MGKEATRVRRRERKNIASGIAHVNSSFNNTTITITDAQGNTIAWSSAGTMGFKGSRKSTPYAAQVAAEDVSKKAQEHGMRTLEVEVAGPGSGRESALRALQAAGFTVTSIRDVTTIPHNGCRPRKRRRV.

Belongs to the universal ribosomal protein uS11 family. In terms of assembly, part of the 30S ribosomal subunit. Interacts with proteins S7 and S18. Binds to IF-3.

In terms of biological role, located on the platform of the 30S subunit, it bridges several disparate RNA helices of the 16S rRNA. Forms part of the Shine-Dalgarno cleft in the 70S ribosome. This chain is Small ribosomal subunit protein uS11, found in Rhodopseudomonas palustris (strain BisB18).